Reading from the N-terminus, the 232-residue chain is 7-cyano-7-deazaguanine synthase (232 aa).

Position 7-17 (7-17 (CSGGLDSVSLA)) interacts with ATP. Zn(2+) is bound by residues Cys185, Cys193, Cys196, and Cys199.

Belongs to the QueC family. It depends on Zn(2+) as a cofactor.

It carries out the reaction 7-carboxy-7-deazaguanine + NH4(+) + ATP = 7-cyano-7-deazaguanine + ADP + phosphate + H2O + H(+). It functions in the pathway purine metabolism; 7-cyano-7-deazaguanine biosynthesis. Functionally, catalyzes the ATP-dependent conversion of 7-carboxy-7-deazaguanine (CDG) to 7-cyano-7-deazaguanine (preQ(0)). In Brucella canis (strain ATCC 23365 / NCTC 10854 / RM-666), this protein is 7-cyano-7-deazaguanine synthase.